Here is a 450-residue protein sequence, read N- to C-terminus: Tubulin alpha-6 chain (450 aa).

Residues Gln11, Glu71, Gly144, Thr145, Thr179, Asn206, and Asn228 each coordinate GTP. Residue Glu71 coordinates Mg(2+). Glu254 is an active-site residue.

The protein belongs to the tubulin family. In terms of assembly, dimer of alpha and beta chains. A typical microtubule is a hollow water-filled tube with an outer diameter of 25 nm and an inner diameter of 15 nM. Alpha-beta heterodimers associate head-to-tail to form protofilaments running lengthwise along the microtubule wall with the beta-tubulin subunit facing the microtubule plus end conferring a structural polarity. Microtubules usually have 13 protofilaments but different protofilament numbers can be found in some organisms and specialized cells. Mg(2+) serves as cofactor. In terms of processing, undergoes a tyrosination/detyrosination cycle, the cyclic removal and re-addition of a C-terminal tyrosine residue by the enzymes tubulin tyrosine carboxypeptidase (TTCP) and tubulin tyrosine ligase (TTL), respectively.

The protein resides in the cytoplasm. It is found in the cytoskeleton. The enzyme catalyses GTP + H2O = GDP + phosphate + H(+). Its function is as follows. Tubulin is the major constituent of microtubules, a cylinder consisting of laterally associated linear protofilaments composed of alpha- and beta-tubulin heterodimers. Microtubules grow by the addition of GTP-tubulin dimers to the microtubule end, where a stabilizing cap forms. Below the cap, tubulin dimers are in GDP-bound state, owing to GTPase activity of alpha-tubulin. This is Tubulin alpha-6 chain (TUBA6) from Zea mays (Maize).